Consider the following 993-residue polypeptide: Serine/threonine-protein phosphatase 6 regulatory ankyrin repeat subunit B (993 aa).

ANK repeat units lie at residues 7–36 (CEQPPLVQAIFSGDPEEIRMLIHKTEDVNA), 40–69 (EKRTPLHVAAFLGDAEIIELLILSGARVNA), 73–102 (MWLTPLHRAVASRSEEAVQVLIKHSADVNA), 106–135 (NWQTPLHVAAANKAVKCAEVIIPLLSSVNV), 139–168 (GGRTALHHAALNGHMEMVNLLLAKGANINA), 172–201 (KDRRALHWAAYMGHLDVVALLINHGAEVTC), 205–234 (KGYTPLHAAASNGQISVVKHLLNLGVEIDE), 238–267 (YGNTALHIACYNGQDAVVNELIDYGANVNQ), 271–301 (SGFTPLHFAAASTHGALCLELLVNNGADVNI), 305–334 (DGKSPLHMTAVHGRFTRSQTLIQNGGEIDC), 338–367 (DGNTPLHVAARHGHELLINTLITSGADTAK), 371–400 (HSMFPLHLAALNAHSDCCRKLLSSGFEIDT), 404–433 (FGRTCLHAAAAGGNVECIKLLQSSGADFHK), 437–466 (CGRTPLHYAAANCHFHCIKALVTTGANVNE), 470–498 (WGRTALHYAAASDMDRNKMILGNAHDNSE), 531–561 (EGYNSIHYAAAYGHRQCLELLLERTNTGFEE), 566–595 (ALKSPLHLAAYNGHHQALEVLLQSLVDLDI), 599–628 (KGRTALYLAAFKGHTECVEALVNQGASIFV), 633–662 (TKRTPLHASVINGHTLCLRLLLETADNPEV), 669–698 (KGQTPLMLAVAYGHIDAVSLLLEKEANVDA), 702–731 (VGCTALHRGIMTGHEECVQMLLEQEASILC), 735–764 (RGRTPLHYAAARGHATWLNELLQIALSEED), 771–800 (QGYTPLHWACYNGNENCIEVLLEQKCFRKF), 803–832 (NPFTPLHCAIINGHESCASLLLGAIDPSIV), 838–867 (KGRTTLHAAAFGDHAECLQLLLRHDAQVNA), 871–901 (SGKTALMMAAENGQAGAVDILVNSAQADLTV), 905–934 (DLNTPLHLAISKGHEKCALLILDKIQDESL), and 941–970 (ALQTPLHIAARNGLKVVVEELLAKGACVLA). Residues 974–993 (NASRSNGPRSPPGTAVRKEE) are disordered.

Protein phosphatase 6 (PP6) holoenzyme is proposed to be a heterotrimeric complex formed by the catalytic subunit, a SAPS domain-containing subunit (PP6R) and an ankyrin repeat-domain containing regulatory subunit (ARS). Interacts with PPP6R1.

Functionally, putative regulatory subunit of protein phosphatase 6 (PP6) that may be involved in the recognition of phosphoprotein substrates. The chain is Serine/threonine-protein phosphatase 6 regulatory ankyrin repeat subunit B (Ankrd44) from Mus musculus (Mouse).